The chain runs to 274 residues: Nitrogenase iron protein (274 aa).

Position 8–15 (8–15 (GKGGIGKS)) interacts with ATP. Position 94 (Cys-94) interacts with [4Fe-4S] cluster. Arg-97 carries the post-translational modification ADP-ribosylarginine; by dinitrogenase reductase ADP-ribosyltransferase. Cys-131 serves as a coordination point for [4Fe-4S] cluster.

The protein belongs to the NifH/BchL/ChlL family. In terms of assembly, homodimer. [4Fe-4S] cluster serves as cofactor. In terms of processing, the reversible ADP-ribosylation of Arg-97 inactivates the nitrogenase reductase and regulates nitrogenase activity.

The catalysed reaction is N2 + 8 reduced [2Fe-2S]-[ferredoxin] + 16 ATP + 16 H2O = H2 + 8 oxidized [2Fe-2S]-[ferredoxin] + 2 NH4(+) + 16 ADP + 16 phosphate + 6 H(+). Functionally, the key enzymatic reactions in nitrogen fixation are catalyzed by the nitrogenase complex, which has 2 components: the iron protein and the molybdenum-iron protein. The chain is Nitrogenase iron protein from Desulfatibacillum aliphaticivorans.